Here is a 155-residue protein sequence, read N- to C-terminus: Small ribosomal subunit protein uS7cz/uS7cy (155 aa).

Belongs to the universal ribosomal protein uS7 family. Part of the 30S ribosomal subunit.

Its subcellular location is the plastid. The protein resides in the chloroplast. Functionally, one of the primary rRNA binding proteins, it binds directly to 16S rRNA where it nucleates assembly of the head domain of the 30S subunit. The polypeptide is Small ribosomal subunit protein uS7cz/uS7cy (rps7-A) (Acorus calamus var. americanus (American sweet flag)).